Consider the following 497-residue polypeptide: Probable cytosol aminopeptidase (497 aa).

Lys264 and Asp269 together coordinate Mn(2+). Residue Lys276 is part of the active site. 3 residues coordinate Mn(2+): Asp287, Asp346, and Glu348. Residue Arg350 is part of the active site.

It belongs to the peptidase M17 family. The cofactor is Mn(2+).

The protein resides in the cytoplasm. The enzyme catalyses Release of an N-terminal amino acid, Xaa-|-Yaa-, in which Xaa is preferably Leu, but may be other amino acids including Pro although not Arg or Lys, and Yaa may be Pro. Amino acid amides and methyl esters are also readily hydrolyzed, but rates on arylamides are exceedingly low.. The catalysed reaction is Release of an N-terminal amino acid, preferentially leucine, but not glutamic or aspartic acids.. Its function is as follows. Presumably involved in the processing and regular turnover of intracellular proteins. Catalyzes the removal of unsubstituted N-terminal amino acids from various peptides. The protein is Probable cytosol aminopeptidase of Persephonella marina (strain DSM 14350 / EX-H1).